The sequence spans 492 residues: MFQYSLWPLLALSGGTGLAYLVVVVVYNLFFHPLRNFPGPWLNSITQVPHTLLMLCGLPHKKHLALHMKYGPVVRIGPNMLSFNHPDAMKDVRGHRKSGEPEHGKDPISVQSNGDNIVGSDRENHTRFRRALAYGFSAQAMLEQEPTFKAYVNQLFQRLHEQSSGGTKPVDISKWYTFTTFDMIGDLAFGESFSCLDNSTYHPWVSLAFESLKSLAFLAEIGRYPRIAPYLGLLVPRGLLTKFAENKELASMKVRKRLDTETDRPDFVGKITQGLKSKGTSMEFNELASNASVLIVAGSETTATLLSAAVYFLCAHPRTLDLLTKEVRSTYTQAHDIDLVSTQGLRYMQAVLDEALRMYPPVAGGGSPRKIAKGGSFVAGHFVPENTLVENDMWAMHYDPKYFTQPHDFIPERWLGDVRFANDRLDAVKPFSIGPRNCIGMNLAYAEMRMMLARTVWEFDIRLSEGSRNWYEESRVYLAWNKPPLNVYLIPR.

A helical transmembrane segment spans residues 6–26; the sequence is LWPLLALSGGTGLAYLVVVVV. Residues 88 to 106 are compositionally biased toward basic and acidic residues; sequence AMKDVRGHRKSGEPEHGKD. The interval 88–116 is disordered; it reads AMKDVRGHRKSGEPEHGKDPISVQSNGDN. Residues N124, N198, and N290 are each glycosylated (N-linked (GlcNAc...) asparagine). A heme-binding site is contributed by C438.

It belongs to the cytochrome P450 family. Requires heme as cofactor.

It is found in the membrane. It participates in sesquiterpene biosynthesis; trichothecene biosynthesis. Its function is as follows. Trichothecene C-15 hydroxylase; part of the core gene cluster that mediates the biosynthesis of trichothecenes, a very large family of chemically related bicyclic sesquiterpene compounds acting as mycotoxins, including T2-toxin. The biosynthesis of trichothecenes begins with the cyclization of farnesyl diphosphate to trichodiene and is catalyzed by the trichodiene synthase TRI5. Trichodiene undergoes a series of oxygenations catalyzed by the cytochrome P450 monooxygenase TRI4. TRI4 controls the addition of four oxygens at C-2, C-3, C-11, and the C-12, C-13-epoxide to form the intermediate isotrichotriol. Isotrichotriol then undergoes a non-enzymatic isomerization and cyclization to form isotrichodermol. During this process, the oxygen at the C-2 position becomes the pyran ring oxygen and the hydroxyl group at C-11 is lost. More complex type A trichothecenes are built by modifying isotrichodermol through a series of paired hydroxylation and acetylation or acylation steps. Isotrichodermol is converted to isotrichodermin by the acetyltransferase TRI101. TRI101 encodes a C-3 transacetylase that acts as a self-protection or resistance factor during biosynthesis and that the presence of a free C-3 hydroxyl group is a key component of Fusarium trichothecene phytotoxicity. A second hydroxyl group is added to C-15 by the trichothecene C-15 hydroxylase TRI11, producing 15-decalonectrin, which is then acetylated by TRI3, producing calonectrin. A third hydroxyl group is added at C-4 by the cytochrome P450 monooxygenase TRI13, converting calonectrin to 3,15-diacetoxyspirpenol, which is subsequently acetylated by the acetyltransferase TRI7. A fourth hydroxyl group is added to C-8 by the cytochrome P450 monooxygenase TRI1, followed by the addition of an isovaleryl moiety by TRI16. Finally, the acetyl group is removed from the C-3 position by the trichothecene C-3 esterase TRI8 to produce T-2 toxin. The protein is Trichothecene C-15 hydroxylase of Fusarium sporotrichioides.